The following is a 333-amino-acid chain: BRISC and BRCA1-A complex member 1 (333 aa).

N-acetylmethionine is present on Met1. Residues 1-85 form a disordered region; that stretch reads MEVAEANSPT…PWQVPASASE (85 aa). Residue Ser8 is modified to Phosphoserine. Residues 10–24 are compositionally biased toward acidic residues; the sequence is TEEEEEEEEEGEETI. Residues Ser33 and Ser53 each carry the phosphoserine modification. Residues 58-67 are compositionally biased toward low complexity; the sequence is EAATADGGAA. Positions 99-302 are VWFA-like; it reads VIICLDLSEE…LELHNCMAKL (204 aa).

The protein belongs to the BABAM1 family. As to quaternary structure, component of the ARISC complex, at least composed of UIMC1/RAP80, ABRAXAS1, BRCC3/BRCC36, BABAM2 and BABAM1/NBA1. Component of the BRCA1-A complex, at least composed of BRCA1, BARD1, UIMC1/RAP80, ABRAXAS1, BRCC3/BRCC36, BABAM2 and BABAM1/NBA1. In the BRCA1-A complex, interacts directly with ABRAXAS1 and BABAM2. Component of the BRISC complex, at least composed of ABRAXAS2, BRCC3/BRCC36, BABAM2 and BABAM1/NBA1. Identified in a complex with SHMT2 and the other subunits of the BRISC complex.

The protein resides in the cytoplasm. It is found in the nucleus. Its function is as follows. Component of the BRCA1-A complex, a complex that specifically recognizes 'Lys-63'-linked ubiquitinated histones H2A and H2AX at DNA lesions sites, leading to target the BRCA1-BARD1 heterodimer to sites of DNA damage at double-strand breaks (DSBs). The BRCA1-A complex also possesses deubiquitinase activity that specifically removes 'Lys-63'-linked ubiquitin on histones H2A and H2AX. In the BRCA1-A complex, it is required for the complex integrity and its localization at DSBs. Component of the BRISC complex, a multiprotein complex that specifically cleaves 'Lys-63'-linked ubiquitin in various substrates. In these 2 complexes, it is probably required to maintain the stability of BABAM2 and help the 'Lys-63'-linked deubiquitinase activity mediated by BRCC3/BRCC36 component. The BRISC complex is required for normal mitotic spindle assembly and microtubule attachment to kinetochores via its role in deubiquitinating NUMA1. Plays a role in interferon signaling via its role in the deubiquitination of the interferon receptor IFNAR1; deubiquitination increases IFNAR1 activity by enhancing its stability and cell surface expression. Down-regulates the response to bacterial lipopolysaccharide (LPS) via its role in IFNAR1 deubiquitination. This chain is BRISC and BRCA1-A complex member 1 (Babam1), found in Mus musculus (Mouse).